A 232-amino-acid polypeptide reads, in one-letter code: 2-C-methyl-D-erythritol 4-phosphate cytidylyltransferase (232 aa).

Belongs to the IspD/TarI cytidylyltransferase family. IspD subfamily.

The enzyme catalyses 2-C-methyl-D-erythritol 4-phosphate + CTP + H(+) = 4-CDP-2-C-methyl-D-erythritol + diphosphate. The protein operates within isoprenoid biosynthesis; isopentenyl diphosphate biosynthesis via DXP pathway; isopentenyl diphosphate from 1-deoxy-D-xylulose 5-phosphate: step 2/6. Catalyzes the formation of 4-diphosphocytidyl-2-C-methyl-D-erythritol from CTP and 2-C-methyl-D-erythritol 4-phosphate (MEP). In Deinococcus radiodurans (strain ATCC 13939 / DSM 20539 / JCM 16871 / CCUG 27074 / LMG 4051 / NBRC 15346 / NCIMB 9279 / VKM B-1422 / R1), this protein is 2-C-methyl-D-erythritol 4-phosphate cytidylyltransferase.